The following is a 307-amino-acid chain: MLNTTSVTEFLLLGVTDIQELQPFLFVVFLTIYFISVTGNGAVLMIVISDPRLHSLMYFFLGNLSYLDICYSTVTLPKMLQNFLSTHKAISFLGCISQLHFFHSLGSTESMLFAVMAFDLSVAICKPLRYTVIMNPQLCTQMAITIWVIGFFHALLHSVMTSRLNFCGSNRIHHFLCDIKPLLKLACGNTELNQWLLSTVTGTIAMGPFFLTLLSYFYIITYLFFKTRSCSMLCKALSTCASHFMVVILFYAPVLFTYIHPALESFMDQDRIVAIMYTVVTPVLNPLIYTLRNKEVKGALGRVIRRL.

The Extracellular segment spans residues 1–23 (MLNTTSVTEFLLLGVTDIQELQP). N-linked (GlcNAc...) asparagine glycosylation occurs at Asn-3. Residues 24–44 (FLFVVFLTIYFISVTGNGAVL) traverse the membrane as a helical segment. The Cytoplasmic portion of the chain corresponds to 45–52 (MIVISDPR). Residues 53–73 (LHSLMYFFLGNLSYLDICYST) form a helical membrane-spanning segment. Residues 74–97 (VTLPKMLQNFLSTHKAISFLGCIS) lie on the Extracellular side of the membrane. A disulfide bridge connects residues Cys-95 and Cys-187. Residues 98-118 (QLHFFHSLGSTESMLFAVMAF) traverse the membrane as a helical segment. Residues 119–137 (DLSVAICKPLRYTVIMNPQ) are Cytoplasmic-facing. The helical transmembrane segment at 138–158 (LCTQMAITIWVIGFFHALLHS) threads the bilayer. Topologically, residues 159–195 (VMTSRLNFCGSNRIHHFLCDIKPLLKLACGNTELNQW) are extracellular. Residues 196–215 (LLSTVTGTIAMGPFFLTLLS) traverse the membrane as a helical segment. The Cytoplasmic portion of the chain corresponds to 216-236 (YFYIITYLFFKTRSCSMLCKA). Residues 237-257 (LSTCASHFMVVILFYAPVLFT) traverse the membrane as a helical segment. The Extracellular segment spans residues 258-270 (YIHPALESFMDQD). Residues 271–291 (RIVAIMYTVVTPVLNPLIYTL) traverse the membrane as a helical segment. The Cytoplasmic segment spans residues 292–307 (RNKEVKGALGRVIRRL).

This sequence belongs to the G-protein coupled receptor 1 family.

It localises to the cell membrane. Functionally, odorant receptor. This chain is Olfactory receptor 12D2 (OR12D2), found in Homo sapiens (Human).